A 75-amino-acid chain; its full sequence is Small, acid-soluble spore protein Tlp (75 aa).

The protein belongs to the Tlp family.

The protein localises to the spore core. In Geobacillus thermodenitrificans (strain NG80-2), this protein is Small, acid-soluble spore protein Tlp.